A 195-amino-acid chain; its full sequence is Imidazoleglycerol-phosphate dehydratase (195 aa).

This sequence belongs to the imidazoleglycerol-phosphate dehydratase family.

It localises to the cytoplasm. It carries out the reaction D-erythro-1-(imidazol-4-yl)glycerol 3-phosphate = 3-(imidazol-4-yl)-2-oxopropyl phosphate + H2O. The protein operates within amino-acid biosynthesis; L-histidine biosynthesis; L-histidine from 5-phospho-alpha-D-ribose 1-diphosphate: step 6/9. The chain is Imidazoleglycerol-phosphate dehydratase from Burkholderia mallei (strain NCTC 10247).